Consider the following 92-residue polypeptide: Small ribosomal subunit protein uS19 (92 aa).

It belongs to the universal ribosomal protein uS19 family.

Protein S19 forms a complex with S13 that binds strongly to the 16S ribosomal RNA. This chain is Small ribosomal subunit protein uS19, found in Novosphingobium aromaticivorans (strain ATCC 700278 / DSM 12444 / CCUG 56034 / CIP 105152 / NBRC 16084 / F199).